The primary structure comprises 342 residues: MSSERDIWITEVALRDGSHAINHQYTVEQVVSVAQALDEANVPYIEVSHGDGLAGSSLQYGLSRTDEMELIEAAVSVCKKAKIAVLLLPGIGTIRELDAAAKRGVKMVRIATHVTEADISAQHITRAKELGLEAVGFLMMSHMASTEKLVEQAKLMESYGADVVYVVDSAGALLPHEVTERIRALKQSLGIEIGFHGHNNLSLAMANTLAAIQEGATRIDGSVRCLGAGAGNTQTEVLVAVLDRIGLKTGVDLYKMMDLAEEIVAPILQVPQEITRDSLILGYAGVYSSFRLHAERAAKRFGVDSRDILVELGKRKVVGGQEDMIIDIAAEIASKKTATGAR.

A Pyruvate carboxyltransferase domain is found at 7 to 257 (IWITEVALRD…KTGVDLYKMM (251 aa)). 15-16 (RD) is a binding site for substrate. D16 contributes to the Mn(2+) binding site. The active-site Proton acceptor is H19. Substrate contacts are provided by S169 and H196. Mn(2+) is bound by residues H196 and H198. Y287 serves as a coordination point for substrate.

It belongs to the 4-hydroxy-2-oxovalerate aldolase family.

It catalyses the reaction (S)-4-hydroxy-2-oxopentanoate = acetaldehyde + pyruvate. In Geobacillus thermodenitrificans (strain NG80-2), this protein is 4-hydroxy-2-oxovalerate aldolase (nbaI).